The sequence spans 401 residues: Argininosuccinate synthase (401 aa).

ATP is bound by residues 11-19 and A38; that span reads AYSGGLDTS. Residues Y89 and S94 each contribute to the L-citrulline site. G119 lines the ATP pocket. L-aspartate is bound by residues T121, N125, and D126. Residue N125 participates in L-citrulline binding. L-citrulline contacts are provided by R129, S177, S186, E262, and Y274.

The protein belongs to the argininosuccinate synthase family. Type 1 subfamily. As to quaternary structure, homotetramer.

It localises to the cytoplasm. It catalyses the reaction L-citrulline + L-aspartate + ATP = 2-(N(omega)-L-arginino)succinate + AMP + diphosphate + H(+). It functions in the pathway amino-acid biosynthesis; L-arginine biosynthesis; L-arginine from L-ornithine and carbamoyl phosphate: step 2/3. The chain is Argininosuccinate synthase from Nitratidesulfovibrio vulgaris (strain DSM 19637 / Miyazaki F) (Desulfovibrio vulgaris).